Reading from the N-terminus, the 284-residue chain is 2-dehydro-3-deoxyphosphooctonate aldolase (284 aa).

It belongs to the KdsA family.

It is found in the cytoplasm. The enzyme catalyses D-arabinose 5-phosphate + phosphoenolpyruvate + H2O = 3-deoxy-alpha-D-manno-2-octulosonate-8-phosphate + phosphate. It participates in carbohydrate biosynthesis; 3-deoxy-D-manno-octulosonate biosynthesis; 3-deoxy-D-manno-octulosonate from D-ribulose 5-phosphate: step 2/3. It functions in the pathway bacterial outer membrane biogenesis; lipopolysaccharide biosynthesis. In Citrobacter koseri (strain ATCC BAA-895 / CDC 4225-83 / SGSC4696), this protein is 2-dehydro-3-deoxyphosphooctonate aldolase.